The following is a 205-amino-acid chain: ATP-dependent Clp protease proteolytic subunit (205 aa).

The Nucleophile role is filled by Ser-109. His-134 is a catalytic residue.

Belongs to the peptidase S14 family. Fourteen ClpP subunits assemble into 2 heptameric rings which stack back to back to give a disk-like structure with a central cavity, resembling the structure of eukaryotic proteasomes.

Its subcellular location is the cytoplasm. The catalysed reaction is Hydrolysis of proteins to small peptides in the presence of ATP and magnesium. alpha-casein is the usual test substrate. In the absence of ATP, only oligopeptides shorter than five residues are hydrolyzed (such as succinyl-Leu-Tyr-|-NHMec, and Leu-Tyr-Leu-|-Tyr-Trp, in which cleavage of the -Tyr-|-Leu- and -Tyr-|-Trp bonds also occurs).. Functionally, cleaves peptides in various proteins in a process that requires ATP hydrolysis. Has a chymotrypsin-like activity. Plays a major role in the degradation of misfolded proteins. The protein is ATP-dependent Clp protease proteolytic subunit of Baumannia cicadellinicola subsp. Homalodisca coagulata.